Reading from the N-terminus, the 1010-residue chain is Peroxisome proliferator-activated receptor gamma coactivator 1-beta (1010 aa).

The interval 1–91 (MAGNDCGALL…FFQIDSENEA (91 aa)) is abolishes DNA transcriptional activity when missing. The disordered stretch occupies residues 115-134 (GLDEGDTPSCTPASPAPLSV). Residues 140 to 144 (LERLL) carry the LXXLL motif 1 motif. Residues serine 145 and serine 148 each carry the phosphoserine modification. The LXXLL motif 2 signature appears at 156–160 (LQKLL). Disordered regions lie at residues 165-214 (SPTA…RPCT), 227-282 (PRGK…QVPK), and 306-329 (PQRA…PRSR). Composition is skewed to polar residues over residues 178 to 189 (TWSQTSLSSRSQ) and 264 to 279 (PQDS…NSAQ). An LXXLL motif 3 motif is present at residues 342–346 (LRELL). Over residues 369–384 (TPQSRTRPPKDSQASP) the composition is skewed to polar residues. Disordered regions lie at residues 369–475 (TPQS…VCPV), 517–567 (GLTD…CLML), and 590–674 (GTAG…QKRP). Position 383 is a phosphoserine (serine 383). Residues 411–428 (LRLEVKRDVNKPARQKRE) are compositionally biased toward basic and acidic residues. The segment covering 429-449 (EDEEEEEEEEEEEEKEDEEEE) has biased composition (acidic residues). Residues 521-532 (SSQGQQLPLGSQ) are compositionally biased toward low complexity. Residues 604-618 (PMEEDPFKQDTKHSP) show a composition bias toward basic and acidic residues. Polar residues-rich tracts occupy residues 619–638 (GQDT…TATP) and 659–670 (QHATTQPVSQAG). Serine 628 carries the phosphoserine modification. An HCFC1-binding-motif (HBM) motif is present at residues 681-684 (DHDY). Disordered regions lie at residues 714 to 744 (HQGA…SMQL) and 778 to 881 (DTVF…KKRR). Over residues 782–794 (EDSSSSSGESSFL) the composition is skewed to low complexity. Residues 795 to 811 (LEEEEEEGGEEDDEGED) show a composition bias toward acidic residues. A compositionally biased stretch (low complexity) spans 832–852 (SRQLCSRSRSSSGSSSCSSWS). The RRM domain maps to 889 to 963 (RVVYIRNLSG…RNEPSFHLSY (75 aa)).

In terms of assembly, interacts with estrogen receptor alpha/ESR1. Interacts with Sterol regulatory binding transcription factor 1/SREBF1, PPAR-alpha/PPARA, thyroid hormone receptor beta/THRB and host cell factor/HCFC1. Interacts with Estrogen-related receptor gamma/ESRRG and alpha/ESRRA. Interacts with PRDM16. Ubiquitous with higher expression in heart, brown adipose tissue.

Its subcellular location is the nucleus. In terms of biological role, plays a role of stimulator of transcription factors and nuclear receptors activities. Activates transcriptional activity of estrogen receptor alpha, nuclear respiratory factor 1 (NRF1) and glucocorticoid receptor in the presence of glucocorticoids. May play a role in constitutive non-adrenergic-mediated mitochondrial biogenesis as suggested by increased basal oxygen consumption and mitochondrial number when overexpressed. May be part of the pathways regulating the elevation of gluconeogenesis, beta-oxidation of fatty acids and ketogenesis during fasting. Stimulates SREBP-mediated lipogenic gene expression in the liver. Induces energy expenditure and antagonizes obesity when overexpressed. Also induces the expression of mitochondrial genes involved in oxidative metabolism. Induces the expression of PERM1 in the skeletal muscle in an ESRRA-dependent manner. This chain is Peroxisome proliferator-activated receptor gamma coactivator 1-beta (Ppargc1b), found in Rattus norvegicus (Rat).